A 379-amino-acid chain; its full sequence is Cytochrome b (379 aa).

4 helical membrane-spanning segments follow: residues 33–53 (FGSLLGMCLVIQILTGLFLAM), 77–98 (WLIRYLHANGASMFFICLFIHV), 113–133 (WNIGIILFLTTMATAFVGYVL), and 178–198 (FFAFHFILPFIIAAFALVHLL). Positions 83 and 97 each coordinate heme b. Residues His182 and His196 each contribute to the heme b site. His201 provides a ligand contact to a ubiquinone. 4 helical membrane passes run 226 to 246 (IKDLLGIFLLLLVLMILTLFF), 288 to 308 (LGGVLALILSILILAAFPLLN), 320 to 340 (VTQVIYWIFIANLLVLTWIGG), and 347 to 367 (FTMIGQIASITYFAIIIILIP).

This sequence belongs to the cytochrome b family. As to quaternary structure, the cytochrome bc1 complex contains 11 subunits: 3 respiratory subunits (MT-CYB, CYC1 and UQCRFS1), 2 core proteins (UQCRC1 and UQCRC2) and 6 low-molecular weight proteins (UQCRH/QCR6, UQCRB/QCR7, UQCRQ/QCR8, UQCR10/QCR9, UQCR11/QCR10 and a cleavage product of UQCRFS1). This cytochrome bc1 complex then forms a dimer. It depends on heme b as a cofactor.

The protein resides in the mitochondrion inner membrane. In terms of biological role, component of the ubiquinol-cytochrome c reductase complex (complex III or cytochrome b-c1 complex) that is part of the mitochondrial respiratory chain. The b-c1 complex mediates electron transfer from ubiquinol to cytochrome c. Contributes to the generation of a proton gradient across the mitochondrial membrane that is then used for ATP synthesis. This chain is Cytochrome b (MT-CYB), found in Akodon subfuscus (Puno grass mouse).